The chain runs to 276 residues: 3,4-dihydroxyphenylacetate 2,3-dioxygenase (276 aa).

Fe cation serves as cofactor.

It catalyses the reaction 3,4-dihydroxyphenylacetate + O2 = 2-hydroxy-5-carboxymethylmuconate semialdehyde + H(+). It functions in the pathway aromatic compound metabolism; 4-hydroxyphenylacetate degradation; pyruvate and succinate semialdehyde from 4-hydroxyphenylacetate: step 2/7. In terms of biological role, transforms homoprotocatechuic acid (HPC) into 5-carboxymethyl-2-hydroxy-muconic semialdehyde (CHMS). The sequence is that of 3,4-dihydroxyphenylacetate 2,3-dioxygenase (hpcB) from Escherichia coli.